Reading from the N-terminus, the 357-residue chain is Protein Wnt-5b (357 aa).

The N-terminal stretch at 1-18 is a signal peptide; that stretch reads MPGIRLLLAAALLCCPPP. C81 and C92 are disulfide-bonded. Residues N91 and N97 are each glycosylated (N-linked (GlcNAc...) asparagine). Intrachain disulfides connect C131-C139, C141-C159, C215-C229, C217-C224, C286-C317, C302-C312, C316-C356, C332-C347, C334-C344, and C339-C340. S221 carries O-palmitoleoyl serine; by PORCN lipidation. N-linked (GlcNAc...) asparagine glycosylation is found at N289 and N303.

It belongs to the Wnt family. In terms of processing, palmitoleoylation is required for efficient binding to frizzled receptors. Depalmitoleoylation leads to Wnt signaling pathway inhibition. Predominantly in neuroectodermal tissues.

The protein localises to the secreted. The protein resides in the extracellular space. It localises to the extracellular matrix. In terms of biological role, ligand for members of the frizzled family of seven transmembrane receptors. Probable developmental protein. May be a signaling molecule which affects the development of discrete regions of tissues. Is likely to signal over only few cell diameters. The chain is Protein Wnt-5b (WNT-5B) from Ambystoma mexicanum (Axolotl).